The following is a 339-amino-acid chain: GTP 3',8-cyclase (339 aa).

A Radical SAM core domain is found at 13–249; the sequence is RYGRPLRDLR…GEVAQRHAFA (237 aa). Arg-22 provides a ligand contact to GTP. 2 residues coordinate [4Fe-4S] cluster: Cys-29 and Cys-33. Tyr-35 contributes to the S-adenosyl-L-methionine binding site. Cys-36 is a [4Fe-4S] cluster binding site. Arg-75 contacts GTP. Residue Gly-79 participates in S-adenosyl-L-methionine binding. Thr-106 serves as a coordination point for GTP. Ser-130 is an S-adenosyl-L-methionine binding site. Lys-168 contacts GTP. Met-202 contributes to the S-adenosyl-L-methionine binding site. Positions 266 and 269 each coordinate [4Fe-4S] cluster. Position 271 to 273 (271 to 273) interacts with GTP; it reads RAR. [4Fe-4S] cluster is bound at residue Cys-283.

It belongs to the radical SAM superfamily. MoaA family. In terms of assembly, monomer and homodimer. It depends on [4Fe-4S] cluster as a cofactor.

It carries out the reaction GTP + AH2 + S-adenosyl-L-methionine = (8S)-3',8-cyclo-7,8-dihydroguanosine 5'-triphosphate + 5'-deoxyadenosine + L-methionine + A + H(+). It functions in the pathway cofactor biosynthesis; molybdopterin biosynthesis. Catalyzes the cyclization of GTP to (8S)-3',8-cyclo-7,8-dihydroguanosine 5'-triphosphate. The protein is GTP 3',8-cyclase of Xanthomonas campestris pv. campestris (strain 8004).